Here is a 164-residue protein sequence, read N- to C-terminus: SsrA-binding protein (164 aa).

Residues 141–164 are disordered; sequence KLHDKRQDEKQKSIKKEINSALKR. The segment covering 145–158 has biased composition (basic and acidic residues); that stretch reads KRQDEKQKSIKKEI.

This sequence belongs to the SmpB family.

The protein resides in the cytoplasm. Functionally, required for rescue of stalled ribosomes mediated by trans-translation. Binds to transfer-messenger RNA (tmRNA), required for stable association of tmRNA with ribosomes. tmRNA and SmpB together mimic tRNA shape, replacing the anticodon stem-loop with SmpB. tmRNA is encoded by the ssrA gene; the 2 termini fold to resemble tRNA(Ala) and it encodes a 'tag peptide', a short internal open reading frame. During trans-translation Ala-aminoacylated tmRNA acts like a tRNA, entering the A-site of stalled ribosomes, displacing the stalled mRNA. The ribosome then switches to translate the ORF on the tmRNA; the nascent peptide is terminated with the 'tag peptide' encoded by the tmRNA and targeted for degradation. The ribosome is freed to recommence translation, which seems to be the essential function of trans-translation. In Prochlorococcus marinus (strain AS9601), this protein is SsrA-binding protein.